A 278-amino-acid chain; its full sequence is Gap junction delta-3 protein (278 aa).

Over 1-24 the chain is Cytoplasmic; the sequence is MGEWAFLGSLLDAVQLQSPLVGRL. A helical transmembrane segment spans residues 25-45; that stretch reads WLVIMLIFRILVLATVGGAVF. The Extracellular portion of the chain corresponds to 46–76; sequence EDEQEEFVCNTLQPGCRQTCYDRAFPVSHYR. A helical transmembrane segment spans residues 77–97; that stretch reads FWLFHILLLSAPPVLFVIYSM. Residues 98-136 lie on the Cytoplasmic side of the membrane; it reads HQASKEAGGAQLAPPCARGRAEAPCSPCALRARRARRCY. Residues 137–157 form a helical membrane-spanning segment; sequence LLSVALRLLAELAFLGGQALL. The Extracellular segment spans residues 158–188; it reads YGFRVDPHYACAGPPCPHTVDCFVSRPTEKT. The helical transmembrane segment at 189–209 threads the bilayer; sequence VFVVFYFAVGLLSALLSVAEL. The Cytoplasmic portion of the chain corresponds to 210–278; that stretch reads GHLLWKGRQR…LATVRQDLAI (69 aa). A disordered region spans residues 223 to 278; that stretch reads LPPPPPSPSLPSQRGDPDPFGPPAYAHRSPAGDSEGEGGSGHSKASLATVRQDLAI.

It belongs to the connexin family. Delta-type subfamily. As to quaternary structure, a connexon is composed of a hexamer of connexins.

It is found in the cell membrane. The protein localises to the cell junction. It localises to the gap junction. Functionally, one gap junction consists of a cluster of closely packed pairs of transmembrane channels, the connexons, through which materials of low MW diffuse from one cell to a neighboring cell. The chain is Gap junction delta-3 protein (Gjd3) from Mus musculus (Mouse).